Reading from the N-terminus, the 206-residue chain is Oligoribonuclease (206 aa).

The Exonuclease domain occupies 20 to 183 (LVWLDMEMTG…ADIHESIDEL (164 aa)). Residue Tyr141 is part of the active site.

The protein belongs to the oligoribonuclease family.

The protein localises to the cytoplasm. Functionally, 3'-to-5' exoribonuclease specific for small oligoribonucleotides. The polypeptide is Oligoribonuclease (Burkholderia cenocepacia (strain HI2424)).